A 234-amino-acid chain; its full sequence is Large ribosomal subunit protein uL1 (234 aa).

The protein belongs to the universal ribosomal protein uL1 family. Part of the 50S ribosomal subunit.

Its function is as follows. Binds directly to 23S rRNA. The L1 stalk is quite mobile in the ribosome, and is involved in E site tRNA release. In terms of biological role, protein L1 is also a translational repressor protein, it controls the translation of the L11 operon by binding to its mRNA. The protein is Large ribosomal subunit protein uL1 of Corynebacterium aurimucosum (strain ATCC 700975 / DSM 44827 / CIP 107346 / CN-1) (Corynebacterium nigricans).